Here is a 290-residue protein sequence, read N- to C-terminus: 33 kDa chaperonin (290 aa).

2 disulfides stabilise this stretch: C235/C237 and C268/C271.

Belongs to the HSP33 family. Post-translationally, under oxidizing conditions two disulfide bonds are formed involving the reactive cysteines. Under reducing conditions zinc is bound to the reactive cysteines and the protein is inactive.

It is found in the cytoplasm. Functionally, redox regulated molecular chaperone. Protects both thermally unfolding and oxidatively damaged proteins from irreversible aggregation. Plays an important role in the bacterial defense system toward oxidative stress. In Streptococcus pneumoniae (strain P1031), this protein is 33 kDa chaperonin.